We begin with the raw amino-acid sequence, 75 residues long: Carwaprin-a (75 aa).

The N-terminal stretch at 1 to 24 (MSSGGLLLLLGLLTLWAELTPISG) is a signal peptide. The region spanning 27 to 72 (RPKKPGLCPPRPQKPPCVRECKNDWRCPGEQKCCRYGCIYECRDPI) is the WAP domain. Disulfide bonds link cysteine 34–cysteine 60, cysteine 43–cysteine 64, cysteine 47–cysteine 59, and cysteine 53–cysteine 68.

This sequence belongs to the venom waprin family. In terms of tissue distribution, expressed by the venom gland.

Its subcellular location is the secreted. In terms of biological role, damages membranes of susceptible bacteria. Has no hemolytic activity. Not toxic to mice. Does not inhibit the proteinases elastase and cathepsin G. The sequence is that of Carwaprin-a from Tropidechis carinatus (Australian rough-scaled snake).